Here is a 465-residue protein sequence, read N- to C-terminus: Ribulose bisphosphate carboxylase large chain (465 aa).

N6,N6,N6-trimethyllysine is present on Lys-4. Asn-113 and Thr-163 together coordinate substrate. Residue Lys-165 is the Proton acceptor of the active site. Lys-167 contributes to the substrate binding site. Mg(2+) is bound by residues Lys-191, Asp-193, and Glu-194. N6-carboxylysine is present on Lys-191. The Proton acceptor role is filled by His-284. Residues Arg-285, His-317, and Ser-369 each contribute to the substrate site.

Belongs to the RuBisCO large chain family. Type I subfamily. Heterohexadecamer of 8 large chains and 8 small chains; disulfide-linked. The disulfide link is formed within the large subunit homodimers. It depends on Mg(2+) as a cofactor. Post-translationally, the disulfide bond which can form in the large chain dimeric partners within the hexadecamer appears to be associated with oxidative stress and protein turnover.

The protein localises to the plastid. It localises to the chloroplast. The catalysed reaction is 2 (2R)-3-phosphoglycerate + 2 H(+) = D-ribulose 1,5-bisphosphate + CO2 + H2O. It carries out the reaction D-ribulose 1,5-bisphosphate + O2 = 2-phosphoglycolate + (2R)-3-phosphoglycerate + 2 H(+). Its function is as follows. RuBisCO catalyzes two reactions: the carboxylation of D-ribulose 1,5-bisphosphate, the primary event in carbon dioxide fixation, as well as the oxidative fragmentation of the pentose substrate in the photorespiration process. Both reactions occur simultaneously and in competition at the same active site. This chain is Ribulose bisphosphate carboxylase large chain, found in Ephedra tweediana (Vining horsetail).